The primary structure comprises 676 residues: Solute carrier family 26 member 10 (676 aa).

The tract at residues 1–24 (MSGPLASGTCSDPEEVSDLKSPLS) is disordered. Transmembrane regions (helical) follow at residues 101-121 (AVAGVTVGVVHVPQGMAFALL), 124-144 (VPPVFGLYTSFFPVLIYSLLG), 149-165 (LSTGTFAVLSLMTGSVV), 190-210 (VGAAAAVAFGSGALMLGMFVL), 226-246 (ALTSGAALHVLVSQLPSLLGL), 267-287 (ALSQSSPAEVTISALSLVLLV), 300-320 (LLTPIPGEVVMVLLATVLCFT), 353-373 (ILADSLPISLVTFAVSTSLAS), 398-418 (ISSLFSCFPNSATLATTSLLV), 426-446 (LAGLFSCAVVLAALLWLRPFF), and 487-507 (IVTWVAVVTLNVDLGLAVGVV). The 122-residue stretch at 539-660 (ESRKLLQVPG…VSVQDAAAHA (122 aa)) folds into the STAS domain.

Belongs to the SLC26A/SulP transporter (TC 2.A.53) family.

Its subcellular location is the membrane. Its function is as follows. Chloride/bicarbonate exchanger. In Mus musculus (Mouse), this protein is Solute carrier family 26 member 10 (Slc26a10).